The primary structure comprises 399 residues: STOREKEEPER protein (399 aa).

Disordered stretches follow at residues 1–160 and 250–301; these read MAPK…RSLW and GISN…EEQQ. Over residues 20-54 the composition is skewed to acidic residues; it reads EEQELVEESQEEEEQQSREEEGEEESGEETEEDEE. Residues 69-79 show a composition bias toward polar residues; sequence KLVQTPQKPQF. Low complexity-rich tracts occupy residues 80–100 and 116–125; these read SSES…SGNS and AAKAATPSKP. Composition is skewed to basic and acidic residues over residues 143 to 152 and 270 to 299; these read KIAEEEEKKS and KTVE…KEEE.

The protein belongs to the GeBP family. As to expression, expressed in tubers and in leaves treated with sucrose.

The protein localises to the nucleus. Its function is as follows. May act as a transcriptional regulator. Binds specifically to the B-box motif, a promoter element that is required for the tuber-specific and sucrose inducible expression of the patatin gene. The chain is STOREKEEPER protein from Solanum tuberosum (Potato).